We begin with the raw amino-acid sequence, 327 residues long: MSFKKFPRHLLSIRDLSRGEIVKLIDRSSEIKQAYKQNFQNRRSVQMSGLSSQNVAMIFSKRSTRTRVSVESAVSCLGGNAMFLGKDDIQLGVNESLYDTSKVISSMVSGIVARVNKYSDVATLAKHASCPVINGLCDTFHPLQALADLLTIKETFKSFDGLKVAWVGDANNVLHDLMIANAKVGIHTSVAKPKDVNVRDDILSIVNEAANENGSTFEIVNDPKVAVKNADIVVTDTWISMGQEAEKEQRLKQFTGFQVTGEIMKLAKPSCKFMHCLPRHPEEVSDEVFYGENSLVFQEAENRKWTTVAVLEALLVNRGEILPPASA.

Carbamoyl phosphate is bound by residues S63–T66, R114, H141, and Q144. Residues N172, D236, S240, and M241 each coordinate L-ornithine. Residue C276 is the Proton acceptor of the active site. Carbamoyl phosphate-binding positions include C276–L277 and R303.

Belongs to the aspartate/ornithine carbamoyltransferase superfamily. OTCase family. As to quaternary structure, interacts with trx2.

It localises to the mitochondrion matrix. It catalyses the reaction carbamoyl phosphate + L-ornithine = L-citrulline + phosphate + H(+). The protein operates within amino-acid biosynthesis; L-arginine biosynthesis; L-arginine from L-ornithine and carbamoyl phosphate: step 1/3. In terms of biological role, ornithine carbamoyltransferase involved in the synthesis of arginine from glutamate via ornithine and the urea cycle. This Schizosaccharomyces pombe (strain 972 / ATCC 24843) (Fission yeast) protein is Ornithine carbamoyltransferase, mitochondrial (arg3).